The chain runs to 574 residues: Lipase maturation factor 1 (574 aa).

The interval 1 to 39 is disordered; sequence MRPDSLVMAAPEGSLRKRKVGGAEHSPASQPSLARDPAD. The Cytoplasmic segment spans residues 1-49; the sequence is MRPDSLVMAAPEGSLRKRKVGGAEHSPASQPSLARDPADSPARLHTGTF. Residues 50–72 form a helical membrane-spanning segment; the sequence is WLTRIVLLRALAFIYFVAFLVAF. The Lumenal portion of the chain corresponds to 73 to 127; it reads NQNKALIGDRGLLPCKLYLKNVQEYFQGSTGWAAWTYAPTIMWLLDWSDMNFNLD. Residues 128–151 traverse the membrane as a helical segment; sequence LIALLGLGISSFVLVTGCANMILM. At 152–207 the chain is on the cytoplasmic side; sequence TALWALYMSLVNVGQIWYSFGWESQLLETGFLGIFLSPLWTLSRLPKNTPTSQIVL. A helical transmembrane segment spans residues 208-221; the sequence is WGFRWLIFRIMLGA. The Lumenal portion of the chain corresponds to 222–292; that stretch reads GLIKVRGDKC…LGRRMRILHG (71 aa). The chain crosses the membrane as a helical span at residues 293–321; sequence VLQILFQVILIISGNLSFLNWLTIVPSLA. The Cytoplasmic portion of the chain corresponds to 322–367; it reads CFDDAALGFLFPSGPQGLKKQVLEIQREDTQRVQPKPRDRGCLVRQ. The helical transmembrane segment at 368-388 threads the bilayer; that stretch reads VVNISLGILVAWLSVPVVINL. Residues 389-574 lie on the Lumenal side of the membrane; it reads LSSRQIMNTS…LPEPPSRHTR (186 aa).

This sequence belongs to the lipase maturation factor family. In terms of assembly, interacts with LPL and SEL1L. Expressed in all tissues synthesizing lipoprotein lipase (Lpl) and hepatic lipase (Lipc), including adipose tissue, skeletal muscle, heart, and liver. Expressed at higher levels in tissues that express little or no lipase activity such as testis and pancreas suggesting additional functions in these tissues.

It localises to the endoplasmic reticulum membrane. Its function is as follows. Involved in the maturation of specific proteins in the endoplasmic reticulum. Required for maturation and transport of active lipoprotein lipase (LPL) through the secretory pathway. Each LMF1 molecule chaperones 50 or more molecules of LPL. In Mus musculus (Mouse), this protein is Lipase maturation factor 1 (Lmf1).